Reading from the N-terminus, the 352-residue chain is Histidine biosynthesis bifunctional protein HisB (352 aa).

Positions 1–164 (MSQKILFIDR…EIENEILSSF (164 aa)) are histidinol-phosphatase. Asp9 serves as the catalytic Nucleophile. Asp9 and Asp11 together coordinate Mg(2+). Asp11 functions as the Proton donor in the catalytic mechanism. The Zn(2+) site is built by Cys93, His95, Cys101, and Cys103. Asp130 lines the Mg(2+) pocket. An imidazoleglycerol-phosphate dehydratase region spans residues 165-352 (RSASYQRTTK…ENLASSKGVI (188 aa)).

This sequence in the N-terminal section; belongs to the histidinol-phosphatase family. It in the C-terminal section; belongs to the imidazoleglycerol-phosphate dehydratase family. It depends on Mg(2+) as a cofactor. Zn(2+) serves as cofactor.

The protein localises to the cytoplasm. The enzyme catalyses D-erythro-1-(imidazol-4-yl)glycerol 3-phosphate = 3-(imidazol-4-yl)-2-oxopropyl phosphate + H2O. It catalyses the reaction L-histidinol phosphate + H2O = L-histidinol + phosphate. It participates in amino-acid biosynthesis; L-histidine biosynthesis; L-histidine from 5-phospho-alpha-D-ribose 1-diphosphate: step 6/9. The protein operates within amino-acid biosynthesis; L-histidine biosynthesis; L-histidine from 5-phospho-alpha-D-ribose 1-diphosphate: step 8/9. The protein is Histidine biosynthesis bifunctional protein HisB of Campylobacter jejuni subsp. jejuni serotype O:6 (strain 81116 / NCTC 11828).